The chain runs to 252 residues: 5-oxoprolinase subunit A (252 aa).

The protein belongs to the LamB/PxpA family. As to quaternary structure, forms a complex composed of PxpA, PxpB and PxpC.

The catalysed reaction is 5-oxo-L-proline + ATP + 2 H2O = L-glutamate + ADP + phosphate + H(+). Catalyzes the cleavage of 5-oxoproline to form L-glutamate coupled to the hydrolysis of ATP to ADP and inorganic phosphate. In Mycobacterium ulcerans (strain Agy99), this protein is 5-oxoprolinase subunit A.